A 336-amino-acid chain; its full sequence is Ornithine carbamoyltransferase, catabolic (336 aa).

Carbamoyl phosphate-binding positions include 57 to 60, glutamine 84, arginine 108, and 135 to 138; these read STRT and HPTQ. L-ornithine-binding positions include asparagine 168, aspartate 232, and 236-237; that span reads SM. Residues 274–275 and arginine 321 contribute to the carbamoyl phosphate site; that span reads CL.

This sequence belongs to the aspartate/ornithine carbamoyltransferase superfamily. OTCase family.

It localises to the cytoplasm. The enzyme catalyses carbamoyl phosphate + L-ornithine = L-citrulline + phosphate + H(+). Its pathway is amino-acid degradation; L-arginine degradation via ADI pathway; carbamoyl phosphate from L-arginine: step 2/2. Functionally, reversibly catalyzes the transfer of the carbamoyl group from carbamoyl phosphate (CP) to the N(epsilon) atom of ornithine (ORN) to produce L-citrulline. The chain is Ornithine carbamoyltransferase, catabolic from Burkholderia mallei (strain ATCC 23344).